A 240-amino-acid polypeptide reads, in one-letter code: Ribonuclease HII (240 aa).

In terms of domain architecture, RNase H type-2 spans Gly-33–Thr-222. A divalent metal cation-binding residues include Asp-39, Glu-40, and Asp-131.

Belongs to the RNase HII family. Requires Mn(2+) as cofactor. It depends on Mg(2+) as a cofactor.

The protein resides in the cytoplasm. The enzyme catalyses Endonucleolytic cleavage to 5'-phosphomonoester.. Functionally, endonuclease that specifically degrades the RNA of RNA-DNA hybrids. The protein is Ribonuclease HII of Mycobacterium leprae (strain Br4923).